The primary structure comprises 387 residues: Patatin group A-3 (387 aa).

Residues 1–23 (MATTKSFLILIVMILATTSSTFA) form the signal peptide. In terms of domain architecture, PNPLA spans 32 to 230 (LSIDGGGVKG…TVADPALLSV (199 aa)). A GXGXXG motif is present at residues 36-41 (GGGVKG). A GXSXG motif is present at residues 75 to 79 (GTSTG). Residue Ser-77 is the Nucleophile of the active site. N-linked (GlcNAc...) asparagine glycosylation occurs at Asn-115. The Proton acceptor role is filled by Asp-216. Residues 216–218 (DGA) carry the DGA/G motif. A coiled-coil region spans residues 361–385 (ETYEEALKRFAKLLSDRKKLRANKA).

It belongs to the patatin family. In terms of tissue distribution, tuber and stolon.

The protein resides in the vacuole. Functionally, probable lipolytic acyl hydrolase (LAH), an activity which is thought to be involved in the response of tubers to pathogens. This is Patatin group A-3 from Solanum tuberosum (Potato).